Here is a 374-residue protein sequence, read N- to C-terminus: Erythronate-4-phosphate dehydrogenase (374 aa).

Residues S53 and T75 each contribute to the substrate site. D160 lines the NAD(+) pocket. R222 is an active-site residue. D246 serves as a coordination point for NAD(+). E251 is an active-site residue. H268 (proton donor) is an active-site residue. G271 lines the NAD(+) pocket. Position 272 (Y272) interacts with substrate.

Belongs to the D-isomer specific 2-hydroxyacid dehydrogenase family. PdxB subfamily. In terms of assembly, homodimer.

The protein resides in the cytoplasm. The enzyme catalyses 4-phospho-D-erythronate + NAD(+) = (R)-3-hydroxy-2-oxo-4-phosphooxybutanoate + NADH + H(+). The protein operates within cofactor biosynthesis; pyridoxine 5'-phosphate biosynthesis; pyridoxine 5'-phosphate from D-erythrose 4-phosphate: step 2/5. In terms of biological role, catalyzes the oxidation of erythronate-4-phosphate to 3-hydroxy-2-oxo-4-phosphonooxybutanoate. The protein is Erythronate-4-phosphate dehydrogenase of Psychrobacter sp. (strain PRwf-1).